The following is a 195-amino-acid chain: Probable GTP-binding protein EngB (195 aa).

The EngB-type G domain occupies 24 to 195 (DWPEIALAGR…EAWTAILKYL (172 aa)). Residues 32-39 (GRSNVGKS), 59-63 (GKTQL), 77-80 (DVPG), 144-147 (TKAD), and 176-178 (FSS) each bind GTP. Mg(2+)-binding residues include Ser39 and Thr61.

The protein belongs to the TRAFAC class TrmE-Era-EngA-EngB-Septin-like GTPase superfamily. EngB GTPase family. It depends on Mg(2+) as a cofactor.

Its function is as follows. Necessary for normal cell division and for the maintenance of normal septation. The sequence is that of Probable GTP-binding protein EngB from Lactococcus lactis subsp. cremoris (strain MG1363).